The chain runs to 105 residues: Small ribosomal subunit protein uS10 (105 aa).

This sequence belongs to the universal ribosomal protein uS10 family. As to quaternary structure, part of the 30S ribosomal subunit.

In terms of biological role, involved in the binding of tRNA to the ribosomes. This Rickettsia bellii (strain OSU 85-389) protein is Small ribosomal subunit protein uS10.